The following is a 356-amino-acid chain: Mannonate dehydratase 2 (356 aa).

It belongs to the mannonate dehydratase family. Requires Fe(2+) as cofactor. The cofactor is Mn(2+).

The catalysed reaction is D-mannonate = 2-dehydro-3-deoxy-D-gluconate + H2O. The protein operates within carbohydrate metabolism; pentose and glucuronate interconversion. Functionally, catalyzes the dehydration of D-mannonate. This chain is Mannonate dehydratase 2, found in Bacillus licheniformis (strain ATCC 14580 / DSM 13 / JCM 2505 / CCUG 7422 / NBRC 12200 / NCIMB 9375 / NCTC 10341 / NRRL NRS-1264 / Gibson 46).